A 211-amino-acid chain; its full sequence is Ceramide-1-phosphate transfer protein (211 aa).

An N-acylsphingoid base 1-phosphate is bound by residues Asp53, Lys57, Arg103, Arg107, and His147.

The protein belongs to the GLTP family.

The protein resides in the cytoplasm. It localises to the cytosol. Its subcellular location is the golgi apparatus. It is found in the trans-Golgi network membrane. The protein localises to the cell membrane. The protein resides in the endosome membrane. It localises to the nucleus outer membrane. It catalyses the reaction N-(hexadecanoyl)-sphing-4-enine-1-phosphate(in) = N-(hexadecanoyl)-sphing-4-enine-1-phosphate(out). It carries out the reaction N-(9Z-octadecenoyl)-sphing-4-enine-1-phosphate(in) = N-(9Z-octadecenoyl)-sphing-4-enine-1-phosphate(out). Mediates the intracellular transfer of ceramide-1-phosphate (C1P) between organelle membranes and the cell membrane. Required for normal structure of the Golgi stacks. Can bind phosphoceramides with a variety of aliphatic chains, but has a preference for lipids with saturated C16:0 or monounsaturated C18:1 aliphatic chains, and is inefficient with phosphoceramides containing lignoceryl (C24:0). Plays a role in the regulation of the cellular levels of ceramide-1-phosphate, and thereby contributes to the regulation of phospholipase PLA2G4A activity and the release of arachidonic acid. Has no activity with galactosylceramide, lactosylceramide, sphingomyelin, phosphatidylcholine, phosphatidic acid and ceramide. C1P transfer is stimulated by phosphatidylserine in C1P source vesicles. Regulates autophagy and pyroptosis, but not apoptosis. The protein is Ceramide-1-phosphate transfer protein (cptp) of Danio rerio (Zebrafish).